We begin with the raw amino-acid sequence, 563 residues long: Arginine--tRNA ligase (563 aa).

The short motif at 121 to 131 is the 'HIGH' region element; it reads PNIAKPFSIGH.

This sequence belongs to the class-I aminoacyl-tRNA synthetase family. Monomer.

Its subcellular location is the cytoplasm. It catalyses the reaction tRNA(Arg) + L-arginine + ATP = L-arginyl-tRNA(Arg) + AMP + diphosphate. The polypeptide is Arginine--tRNA ligase (Streptococcus pyogenes serotype M2 (strain MGAS10270)).